We begin with the raw amino-acid sequence, 283 residues long: Thymidylate synthase (283 aa).

Arg22 is a binding site for dUMP. Residue Cys160 is the Nucleophile of the active site. Residues 180–183 (RSCD), Asn191, and 221–223 (HIY) each bind dUMP. (6R)-5,10-methylene-5,6,7,8-tetrahydrofolate is bound at residue Asp183. Ser282 provides a ligand contact to (6R)-5,10-methylene-5,6,7,8-tetrahydrofolate.

Belongs to the thymidylate synthase family. Bacterial-type ThyA subfamily. In terms of assembly, homodimer.

It localises to the cytoplasm. It catalyses the reaction dUMP + (6R)-5,10-methylene-5,6,7,8-tetrahydrofolate = 7,8-dihydrofolate + dTMP. It participates in pyrimidine metabolism; dTTP biosynthesis. Functionally, catalyzes the reductive methylation of 2'-deoxyuridine-5'-monophosphate (dUMP) to 2'-deoxythymidine-5'-monophosphate (dTMP) while utilizing 5,10-methylenetetrahydrofolate (mTHF) as the methyl donor and reductant in the reaction, yielding dihydrofolate (DHF) as a by-product. This enzymatic reaction provides an intracellular de novo source of dTMP, an essential precursor for DNA biosynthesis. The sequence is that of Thymidylate synthase from Vibrio atlanticus (strain LGP32) (Vibrio splendidus (strain Mel32)).